We begin with the raw amino-acid sequence, 272 residues long: Putative phosphoenolpyruvate synthase regulatory protein (272 aa).

ADP is bound at residue 152–159 (GVSRCGKT).

The protein belongs to the pyruvate, phosphate/water dikinase regulatory protein family. PSRP subfamily.

The enzyme catalyses [pyruvate, water dikinase] + ADP = [pyruvate, water dikinase]-phosphate + AMP + H(+). The catalysed reaction is [pyruvate, water dikinase]-phosphate + phosphate + H(+) = [pyruvate, water dikinase] + diphosphate. Functionally, bifunctional serine/threonine kinase and phosphorylase involved in the regulation of the phosphoenolpyruvate synthase (PEPS) by catalyzing its phosphorylation/dephosphorylation. This chain is Putative phosphoenolpyruvate synthase regulatory protein, found in Pseudomonas fluorescens (strain ATCC BAA-477 / NRRL B-23932 / Pf-5).